The primary structure comprises 555 residues: Potassium-transporting ATPase potassium-binding subunit (555 aa).

A run of 10 helical transmembrane segments spans residues 2–22, 60–80, 130–150, 173–193, 246–266, 278–298, 374–394, 412–432, 483–503, and 525–545; these read IWVA…PTGI, QYAL…YFIF, IGIT…VMAF, VFLP…VPQT, MSNI…PFTY, ILFV…TTSE, AGFV…GLMV, LIAV…ALAL, LVMF…AASL, and GIFI…MLVL.

It belongs to the KdpA family. As to quaternary structure, the system is composed of three essential subunits: KdpA, KdpB and KdpC.

Its subcellular location is the cell membrane. Functionally, part of the high-affinity ATP-driven potassium transport (or Kdp) system, which catalyzes the hydrolysis of ATP coupled with the electrogenic transport of potassium into the cytoplasm. This subunit binds the extracellular potassium ions and delivers the ions to the membrane domain of KdpB through an intramembrane tunnel. The polypeptide is Potassium-transporting ATPase potassium-binding subunit (Bacillus cereus (strain AH820)).